The sequence spans 141 residues: Hemoglobin subunit alpha (141 aa).

In terms of domain architecture, Globin spans Val1–Arg141. His58 serves as a coordination point for O2. A heme b-binding site is contributed by His87.

Belongs to the globin family. As to quaternary structure, heterotetramer of two alpha chains and two beta chains. In terms of tissue distribution, red blood cells.

In terms of biological role, involved in oxygen transport from the lung to the various peripheral tissues. Has antimicrobial activity against B.subtilis ATCC 6633. Has antioxidant activity. The sequence is that of Hemoglobin subunit alpha from Crocodylus siamensis (Siamese crocodile).